A 221-amino-acid polypeptide reads, in one-letter code: Octanoyltransferase (221 aa).

In terms of domain architecture, BPL/LPL catalytic spans 31–213; the sequence is DKSADEIWLV…HFVTILGYNK (183 aa). Substrate is bound by residues 70–77, 142–144, and 155–157; these read RGGQITYH, SLG, and GLA. The active-site Acyl-thioester intermediate is Cys173.

The protein belongs to the LipB family.

The protein localises to the cytoplasm. It catalyses the reaction octanoyl-[ACP] + L-lysyl-[protein] = N(6)-octanoyl-L-lysyl-[protein] + holo-[ACP] + H(+). It functions in the pathway protein modification; protein lipoylation via endogenous pathway; protein N(6)-(lipoyl)lysine from octanoyl-[acyl-carrier-protein]: step 1/2. Its function is as follows. Catalyzes the transfer of endogenously produced octanoic acid from octanoyl-acyl-carrier-protein onto the lipoyl domains of lipoate-dependent enzymes. Lipoyl-ACP can also act as a substrate although octanoyl-ACP is likely to be the physiological substrate. In Mannheimia succiniciproducens (strain KCTC 0769BP / MBEL55E), this protein is Octanoyltransferase.